Consider the following 342-residue polypeptide: MSAPGGPLARLEARVTREWQRRGALAWALTPFACVFGLCAALRRTAYAQGWKQPVDVGVPVVVVGNVTVGGTGKTPTVIALVDALRAAGFTPGVVSRGYGANVKTPTAVTPASRASAAGDEPLLIARRTDAPVWVCPDRVAAAQALRAAHPDVDVIVSDDGLQHYRLARTVELVVFDHRLGGNGFLLPAGPLREPLSRHRDATLVNDPYSGALPPWPDTYALALTPGAAWHLDQPALRRPLSQFAHERVLAAAGIGAPERFFATLRAAGLAPATRALPDHYAFADNPFVDDAVDAILITEKDAVKLGASWRDARLWVVPVEAALDPRLIALVVEKLRGRSPA.

68–75 (TVGGTGKT) is a binding site for ATP.

This sequence belongs to the LpxK family.

The catalysed reaction is a lipid A disaccharide + ATP = a lipid IVA + ADP + H(+). The protein operates within glycolipid biosynthesis; lipid IV(A) biosynthesis; lipid IV(A) from (3R)-3-hydroxytetradecanoyl-[acyl-carrier-protein] and UDP-N-acetyl-alpha-D-glucosamine: step 6/6. Transfers the gamma-phosphate of ATP to the 4'-position of a tetraacyldisaccharide 1-phosphate intermediate (termed DS-1-P) to form tetraacyldisaccharide 1,4'-bis-phosphate (lipid IVA). This chain is Tetraacyldisaccharide 4'-kinase, found in Burkholderia ambifaria (strain MC40-6).